A 287-amino-acid polypeptide reads, in one-letter code: Ribosomal RNA small subunit methyltransferase I (287 aa).

Belongs to the methyltransferase superfamily. RsmI family.

It is found in the cytoplasm. It carries out the reaction cytidine(1402) in 16S rRNA + S-adenosyl-L-methionine = 2'-O-methylcytidine(1402) in 16S rRNA + S-adenosyl-L-homocysteine + H(+). Functionally, catalyzes the 2'-O-methylation of the ribose of cytidine 1402 (C1402) in 16S rRNA. The polypeptide is Ribosomal RNA small subunit methyltransferase I (Streptococcus pyogenes serotype M3 (strain ATCC BAA-595 / MGAS315)).